A 288-amino-acid polypeptide reads, in one-letter code: Transposase InsF for insertion sequence IS3fB (288 aa).

Residues Tyr124–Leu287 form the Integrase catalytic domain.

This sequence belongs to the transposase IS3/IS150/IS904 family.

Its function is as follows. Involved in the transposition of the insertion sequence IS3. The chain is Transposase InsF for insertion sequence IS3fB (insF7) from Escherichia coli (strain K12).